The sequence spans 401 residues: Ninja-family protein MODD (401 aa).

Disordered regions lie at residues 95–135 and 215–238; these read KQGV…GEGR and TGNK…GLPP. Residues 105-130 show a composition bias toward low complexity; the sequence is RPSGGAEAEPAAARLPASGSPSSGSS. The segment covering 217-226 has biased composition (polar residues); the sequence is NKKTGGNVNH.

Belongs to the Ninja family. As to quaternary structure, interacts with BZIP46, TPR3 and PUB70.

The protein resides in the nucleus. Acts as a negative regulator of abscisic acid (ABA) signaling and drought tolerance. Mediates deactivation and degradation of BZIP46, a positive regulator of ABA signaling and drought stress tolerance. Represses BZIP46 activity via interaction with the TPR3-HDAC1 corepressor complex and down-regulation of the histone acetylation level at BZIP46 target genes. Promotes BZIP46 degradation via interaction with the U-box type ubiquitin E3 ligase PUB70. This chain is Ninja-family protein MODD, found in Oryza sativa subsp. japonica (Rice).